Consider the following 382-residue polypeptide: Anhydro-N-acetylmuramic acid kinase (382 aa).

An ATP-binding site is contributed by 22–29; the sequence is GTSMDGVD.

Belongs to the anhydro-N-acetylmuramic acid kinase family.

The catalysed reaction is 1,6-anhydro-N-acetyl-beta-muramate + ATP + H2O = N-acetyl-D-muramate 6-phosphate + ADP + H(+). The protein operates within amino-sugar metabolism; 1,6-anhydro-N-acetylmuramate degradation. Its pathway is cell wall biogenesis; peptidoglycan recycling. In terms of biological role, catalyzes the specific phosphorylation of 1,6-anhydro-N-acetylmuramic acid (anhMurNAc) with the simultaneous cleavage of the 1,6-anhydro ring, generating MurNAc-6-P. Is required for the utilization of anhMurNAc either imported from the medium or derived from its own cell wall murein, and thus plays a role in cell wall recycling. The chain is Anhydro-N-acetylmuramic acid kinase from Burkholderia vietnamiensis (strain G4 / LMG 22486) (Burkholderia cepacia (strain R1808)).